Reading from the N-terminus, the 48-residue chain is Small, acid-soluble spore protein O (48 aa).

Positions 1-48 (MAKRKANHVINGMNNAKRQGNGAGYIENDQHILTEAERQNNKKRKTNQ) are disordered. Residues 28 to 40 (NDQHILTEAERQN) are compositionally biased toward basic and acidic residues.

This sequence belongs to the SspO family.

The protein localises to the spore core. The chain is Small, acid-soluble spore protein O from Bacillus licheniformis (strain ATCC 14580 / DSM 13 / JCM 2505 / CCUG 7422 / NBRC 12200 / NCIMB 9375 / NCTC 10341 / NRRL NRS-1264 / Gibson 46).